The sequence spans 340 residues: Phosphoribosylformylglycinamidine cyclo-ligase (340 aa).

Belongs to the AIR synthase family.

Its subcellular location is the cytoplasm. The catalysed reaction is 2-formamido-N(1)-(5-O-phospho-beta-D-ribosyl)acetamidine + ATP = 5-amino-1-(5-phospho-beta-D-ribosyl)imidazole + ADP + phosphate + H(+). It functions in the pathway purine metabolism; IMP biosynthesis via de novo pathway; 5-amino-1-(5-phospho-D-ribosyl)imidazole from N(2)-formyl-N(1)-(5-phospho-D-ribosyl)glycinamide: step 2/2. The protein is Phosphoribosylformylglycinamidine cyclo-ligase of Lactococcus lactis subsp. cremoris (strain MG1363).